Consider the following 156-residue polypeptide: Small ribosomal subunit protein uS7 (156 aa).

The protein belongs to the universal ribosomal protein uS7 family. As to quaternary structure, part of the 30S ribosomal subunit. Contacts proteins S9 and S11.

Its function is as follows. One of the primary rRNA binding proteins, it binds directly to 16S rRNA where it nucleates assembly of the head domain of the 30S subunit. Is located at the subunit interface close to the decoding center, probably blocks exit of the E-site tRNA. In Vibrio parahaemolyticus serotype O3:K6 (strain RIMD 2210633), this protein is Small ribosomal subunit protein uS7.